The primary structure comprises 42 residues: Photosystem I reaction center subunit IX (42 aa).

The helical transmembrane segment at 7-27 (YLSTAPVLATLWFGFLAGLLI) threads the bilayer.

Belongs to the PsaJ family.

It is found in the plastid. It localises to the chloroplast thylakoid membrane. May help in the organization of the PsaE and PsaF subunits. In Psilotum nudum (Whisk fern), this protein is Photosystem I reaction center subunit IX.